The chain runs to 534 residues: O-phosphoserine--tRNA(Cys) ligase (534 aa).

Substrate contacts are provided by residues 186–188, 231–233, 273–274, and Asn325; these read HMT, SAS, and YY.

The protein belongs to the class-II aminoacyl-tRNA synthetase family. O-phosphoseryl-tRNA(Cys) synthetase subfamily. In terms of assembly, homotetramer. Interacts with SepCysS.

The catalysed reaction is tRNA(Cys) + O-phospho-L-serine + ATP = O-phospho-L-seryl-tRNA(Cys) + AMP + diphosphate. Catalyzes the attachment of O-phosphoserine (Sep) to tRNA(Cys). This chain is O-phosphoserine--tRNA(Cys) ligase (sepS), found in Archaeoglobus fulgidus (strain ATCC 49558 / DSM 4304 / JCM 9628 / NBRC 100126 / VC-16).